The following is a 173-amino-acid chain: Co-chaperone protein HscB (173 aa).

The region spanning 2–74 is the J domain; it reads DYFTLLGMPN…LSRAEYMLSL (73 aa).

It belongs to the HscB family. In terms of assembly, interacts with HscA and stimulates its ATPase activity. Interacts with IscU.

Functionally, co-chaperone involved in the maturation of iron-sulfur cluster-containing proteins. Seems to help targeting proteins to be folded toward HscA. This is Co-chaperone protein HscB from Proteus mirabilis (strain HI4320).